An 82-amino-acid chain; its full sequence is MKTYAVLLALVVAFVCIAESTGYPVEDLEDDELTELEAEALLEDLLEDLELEDLDYNEEARSWKSMAKKLKEYMEKLKQRAG.

The N-terminal stretch at 1 to 22 (MKTYAVLLALVVAFVCIAESTG) is a signal peptide. Positions 23–61 (YPVEDLEDDELTELEAEALLEDLLEDLELEDLDYNEEAR) are excised as a propeptide. The Processing quadruplet motif signature appears at 58 to 61 (EEAR). Position 81 is an alanine amide (Ala81).

It belongs to the cationic peptide 03 (latarcin) family. 03 subfamily. Post-translationally, cleavage of the propeptide depends on the processing quadruplet motif (XXXR, with at least one of X being E). As to expression, expressed by the venom gland.

It localises to the secreted. The protein localises to the target cell membrane. Its function is as follows. It has antimicrobial activity against Gram-positive bacteria (A.globiformis VKM Ac-1112 (MIC=0.3 uM), and B.subtilis VKM B-501 (MIC=1.2 uM)), Gram-negative bacteria (E.coli DH5-alpha (MIC=2.5 uM), E.coli MH1 (MIC=6.0 uM), and P.aeruginosa PAO1 (MIC&gt;40 uM)), and yeasts (P.pastoris GS115 (MIC=20 uM), and S.cerevisiae Y190 (MIC=20 uM)). Causes paralysis, but is not lethal when injected into insect (M.domestica) larvae. A second study reports antibacterial activity against E.coli (MIC=100 uM) and S.aureus (MIC=84 uM). Furthermore, increases efficacy of antibiotics (chloramphenicol, streptomycin, kanamycin, novobiocin) when tested against E.coli, probably by facilitating their incorporation into the bacteria. In Lachesana tarabaevi (Spider), this protein is M-zodatoxin-Lt3a.